Reading from the N-terminus, the 370-residue chain is MHFESPIKRRRSRQIMVGAVPVGGDAPIAVQSMTNTETCDVDATVAQIETLQQAGADIVRVSVPTMDAAEAFAAIKQRVTLPLVADIHFDYKIALRVAEVGVDCLRINPGNIGREDRVQAVISAAKDKGIPIRIGVNAGSLEKDLQKKYGEPTPEALVESAMRHIDILDRHDFQNFKVSLKASDVFMTVAAYRQIADQIEQPLHLGITEAGGFRSGAVKSAIGLGMLLMDGIGDTIRVSLAADPVEEIRVGYDILKSLKLRSKGINFIACPSCSRQNFDVIKTMNELERRLEDINTPLDVAVIGCVVNGPGEAKEADVGLTGGSPSNLIYVGGKPDHKLNNDELVERFESLIRSKAAAKQEELDALIAKG.

[4Fe-4S] cluster contacts are provided by Cys270, Cys273, Cys305, and Glu312.

The protein belongs to the IspG family. Requires [4Fe-4S] cluster as cofactor.

The enzyme catalyses (2E)-4-hydroxy-3-methylbut-2-enyl diphosphate + oxidized [flavodoxin] + H2O + 2 H(+) = 2-C-methyl-D-erythritol 2,4-cyclic diphosphate + reduced [flavodoxin]. It participates in isoprenoid biosynthesis; isopentenyl diphosphate biosynthesis via DXP pathway; isopentenyl diphosphate from 1-deoxy-D-xylulose 5-phosphate: step 5/6. Functionally, converts 2C-methyl-D-erythritol 2,4-cyclodiphosphate (ME-2,4cPP) into 1-hydroxy-2-methyl-2-(E)-butenyl 4-diphosphate. In Hahella chejuensis (strain KCTC 2396), this protein is 4-hydroxy-3-methylbut-2-en-1-yl diphosphate synthase (flavodoxin).